Consider the following 447-residue polypeptide: Asparagine--tRNA ligase (447 aa).

Belongs to the class-II aminoacyl-tRNA synthetase family. Homodimer.

The protein resides in the cytoplasm. The enzyme catalyses tRNA(Asn) + L-asparagine + ATP = L-asparaginyl-tRNA(Asn) + AMP + diphosphate + H(+). This chain is Asparagine--tRNA ligase, found in Lactococcus lactis subsp. cremoris (strain SK11).